Here is a 134-residue protein sequence, read N- to C-terminus: MEAKTDAPISPAPTTNPPAEAGKEPNASSNAQANPTAAPGAPPSGAIAVGQSTNPVAQQQQQPAVAKKPSSETNNMPTRQYLDQTVAPVLLHGMQALARERPTDPIQFLASYLLKHSNGCDENNASAAAVDNNS.

Residues 1 to 81 are disordered; sequence MEAKTDAPIS…ETNNMPTRQY (81 aa). The span at 31-68 shows a compositional bias: low complexity; that stretch reads AQANPTAAPGAPPSGAIAVGQSTNPVAQQQQQPAVAKK. Polar residues predominate over residues 71–81; sequence SETNNMPTRQY.

This sequence belongs to the dpy-30 family. As to quaternary structure, core component of several methyltransferase-containing complexes. Component of the SET1 complex, composed at least of the catalytic subunit Set1, wds/WDR5, Wdr82, Rbbp5, ash2, Cfp1/CXXC1, hcf and Dpy-30L1. Component of the MLL3/4 complex composed at least of the catalytic subunit trr, ash2, Rbbp5, Dpy-30L1, wds, hcf, ptip, Pa1, Utx, Lpt and Ncoa6. As to expression, expressed in larval brain, gonad, imaginal disk and salivary gland and in adult brain, testis, ovary and salivary gland.

The protein localises to the nucleus. In terms of biological role, component of the SET1 complex that specifically di- and trimethylates 'Lys-4' of histone H3 and of the MLL3/4 complex which also methylates histone H3 'Lys-4'. Inhibits MTF-1 transcription factor activity. This chain is Protein dpy-30 homolog, found in Drosophila melanogaster (Fruit fly).